A 203-amino-acid polypeptide reads, in one-letter code: CASP-like protein 4B2 (203 aa).

The Cytoplasmic portion of the chain corresponds to 1-57; the sequence is MAMVTADASAAADAATKQPDVEKDYSSYNGASTAGAGGGGVVESVVARWRREDMLDK. A helical transmembrane segment spans residues 58-78; sequence CPLALHAAAAAFAFVALVLVA. At 79 to 92 the chain is on the extracellular side; sequence SNQHGDWMQFDRYQ. A helical transmembrane segment spans residues 93–113; the sequence is EYMYLLAIAALAFAYSLAQAL. Topologically, residues 114–135 are cytoplasmic; sequence RHAHRMRGGADPIPAPSARLFD. The chain crosses the membrane as a helical span at residues 136-156; it reads FIADQVVAYLLMSALSAAIPI. The Extracellular segment spans residues 157 to 171; the sequence is TNRMRTAVINNFTDA. Residue asparagine 167 is glycosylated (N-linked (GlcNAc...) asparagine). The chain crosses the membrane as a helical span at residues 172–192; the sequence is TAAAISMAFLAFVALALSATV. At 193–203 the chain is on the cytoplasmic side; that stretch reads SGYKLSRQMYM.

It belongs to the Casparian strip membrane proteins (CASP) family. As to quaternary structure, homodimer and heterodimers.

It localises to the cell membrane. The sequence is that of CASP-like protein 4B2 from Hordeum vulgare subsp. vulgare (Domesticated barley).